Consider the following 374-residue polypeptide: Gustatory receptor 23a (374 aa).

Topologically, residues 1–6 (MFPPTR) are cytoplasmic. The chain crosses the membrane as a helical span at residues 7–27 (VQASSRVVLKIFHFILVAFSL). At 28–36 (RSRRLSRLV) the chain is on the extracellular side. Residues 37-57 (LWLQFLGWLTWFISMWTQSVI) traverse the membrane as a helical segment. Topologically, residues 58–72 (YAQTIDCTLDCSLRH) are cytoplasmic. A helical membrane pass occupies residues 73-93 (ILTFFQTVSHAFIVVTSFLDG). At 94-112 (FRIKQDQLDEPIAFEDSDP) the chain is on the extracellular side. Residues 113–133 (WLAFTVLAMLVPTLGVEYLVC) form a helical membrane-spanning segment. The Cytoplasmic segment spans residues 134 to 226 (SNAPEYAFRI…YNDLHYLFVR (93 aa)). Residues 227–247 (INGYFGGSLLTIIIVHFAIFV) form a helical membrane-spanning segment. Topologically, residues 248–263 (SNSYWLFVDIRTRPWR) are extracellular. A helical transmembrane segment spans residues 264 to 284 (IYAILLNLGFIFNVALQMAAA). Topologically, residues 285-343 (CWHCQQSYNLGRQIGCLISKLVKPQGSKLYNDLVSEFSLQTLHQRFVVTAKDFFSLNLH) are cytoplasmic. Residues 344–364 (LLSSMFAAVVTYLVILIQFMF) form a helical membrane-spanning segment. Topologically, residues 365–374 (AERSSTRGSG) are extracellular.

Belongs to the insect chemoreceptor superfamily. Gustatory receptor (GR) family. Gr2a subfamily. Expressed in the adult labellar chemosensory neurons and labral sense organ. Expressed in neurons of the dorsal pharyngeal sense organ of larvae.

It is found in the cell membrane. Its function is as follows. Probable gustatory receptor which mediates acceptance or avoidance behavior, depending on its substrates. In Drosophila melanogaster (Fruit fly), this protein is Gustatory receptor 23a (Gr23a).